Reading from the N-terminus, the 294-residue chain is Glyceraldehyde-3-phosphate dehydrogenase (294 aa).

NAD(+) contacts are provided by D19, K63, and T105. Residues 134-136 and T165 contribute to the D-glyceraldehyde 3-phosphate site; that span reads SCT. The active-site Nucleophile is the C135. The disordered stretch occupies residues 169 to 188; that stretch reads KTVDGPSHKDWRGGRGASQN. D-glyceraldehyde 3-phosphate is bound by residues 194–195 and R217; that span reads TG.

Belongs to the glyceraldehyde-3-phosphate dehydrogenase family. In terms of assembly, homotetramer.

It is found in the cytoplasm. The enzyme catalyses D-glyceraldehyde 3-phosphate + phosphate + NAD(+) = (2R)-3-phospho-glyceroyl phosphate + NADH + H(+). It functions in the pathway carbohydrate degradation; glycolysis; pyruvate from D-glyceraldehyde 3-phosphate: step 1/5. Its function is as follows. Catalyzes the oxidative phosphorylation of glyceraldehyde 3-phosphate (G3P) to 1,3-bisphosphoglycerate (BPG) using the cofactor NAD. The first reaction step involves the formation of a hemiacetal intermediate between G3P and a cysteine residue, and this hemiacetal intermediate is then oxidized to a thioester, with concomitant reduction of NAD to NADH. The reduced NADH is then exchanged with the second NAD, and the thioester is attacked by a nucleophilic inorganic phosphate to produce BPG. The sequence is that of Glyceraldehyde-3-phosphate dehydrogenase (gap) from Serratia marcescens.